We begin with the raw amino-acid sequence, 331 residues long: Heme A synthase (331 aa).

8 helical membrane passes run 6–26 (VAIWLFLCSLMVICMVGIGGF), 87–107 (YVHRLIARLTGLVFILPFIYF), 124–144 (ALLFGILQAFAGWYMVKSGLV), 154–174 (LALHLLLALVIFALLSYQFFD), 193–213 (IWIILILVTVQIIFGAFVAGL), 251–271 (VQFIHRALALLILVLTAILTI), 279–299 (LYVMLFSVIIQVILGIVTLLL), and 301–321 (IPMAIAIAHQMFSFILFGSGL). His-255 serves as a coordination point for heme. His-309 contacts heme.

It belongs to the COX15/CtaA family. Type 2 subfamily. In terms of assembly, interacts with CtaB. The cofactor is heme b.

It is found in the cell membrane. It carries out the reaction Fe(II)-heme o + 2 A + H2O = Fe(II)-heme a + 2 AH2. The protein operates within porphyrin-containing compound metabolism; heme A biosynthesis; heme A from heme O: step 1/1. Functionally, catalyzes the conversion of heme O to heme A by two successive hydroxylations of the methyl group at C8. The first hydroxylation forms heme I, the second hydroxylation results in an unstable dihydroxymethyl group, which spontaneously dehydrates, resulting in the formyl group of heme A. This is Heme A synthase from Wolbachia pipientis subsp. Culex pipiens (strain wPip).